We begin with the raw amino-acid sequence, 389 residues long: Succinate--CoA ligase [ADP-forming] subunit beta (389 aa).

ATP is bound by residues Lys-46, 53–55 (GRG), Glu-99, Cys-102, and Glu-107. Residues Asn-199 and Asp-213 each coordinate Mg(2+). Substrate-binding positions include Asn-264 and 321–323 (GIV).

This sequence belongs to the succinate/malate CoA ligase beta subunit family. As to quaternary structure, heterotetramer of two alpha and two beta subunits. It depends on Mg(2+) as a cofactor.

It carries out the reaction succinate + ATP + CoA = succinyl-CoA + ADP + phosphate. The catalysed reaction is GTP + succinate + CoA = succinyl-CoA + GDP + phosphate. It functions in the pathway carbohydrate metabolism; tricarboxylic acid cycle; succinate from succinyl-CoA (ligase route): step 1/1. In terms of biological role, succinyl-CoA synthetase functions in the citric acid cycle (TCA), coupling the hydrolysis of succinyl-CoA to the synthesis of either ATP or GTP and thus represents the only step of substrate-level phosphorylation in the TCA. The beta subunit provides nucleotide specificity of the enzyme and binds the substrate succinate, while the binding sites for coenzyme A and phosphate are found in the alpha subunit. The chain is Succinate--CoA ligase [ADP-forming] subunit beta from Haemophilus influenzae (strain PittEE).